Reading from the N-terminus, the 312-residue chain is L-lactate dehydrogenase (312 aa).

NAD(+) contacts are provided by Val14, Asp35, and Tyr66. Residues Gln83, Arg90, and 122–125 (NPVD) contribute to the substrate site. NAD(+) contacts are provided by residues 120–122 (ASN) and Ser145. 150–153 (DSAR) provides a ligand contact to substrate. Catalysis depends on His177, which acts as the Proton acceptor. Residue Tyr220 is modified to Phosphotyrosine. Residue Thr229 coordinates substrate.

This sequence belongs to the LDH/MDH superfamily. LDH family. As to quaternary structure, homotetramer.

Its subcellular location is the cytoplasm. It carries out the reaction (S)-lactate + NAD(+) = pyruvate + NADH + H(+). The protein operates within fermentation; pyruvate fermentation to lactate; (S)-lactate from pyruvate: step 1/1. Functionally, catalyzes the conversion of lactate to pyruvate. This Mycoplasma pneumoniae (strain ATCC 29342 / M129 / Subtype 1) (Mycoplasmoides pneumoniae) protein is L-lactate dehydrogenase.